Reading from the N-terminus, the 199-residue chain is Inner membrane-spanning protein YciB (199 aa).

6 helical membrane-spanning segments follow: residues H7–A27, F32–V52, I56–V76, L93–F113, V126–W146, and F153–Q173.

This sequence belongs to the YciB family.

The protein localises to the cell inner membrane. In terms of biological role, plays a role in cell envelope biogenesis, maintenance of cell envelope integrity and membrane homeostasis. The sequence is that of Inner membrane-spanning protein YciB from Nitrobacter hamburgensis (strain DSM 10229 / NCIMB 13809 / X14).